Reading from the N-terminus, the 779-residue chain is Chloride channel protein CLC-c (779 aa).

The residue at position 27 (Ser-27) is a Phosphoserine. 12 consecutive transmembrane segments (helical) span residues 92–112, 142–162, 190–210, 215–235, 257–277, 287–307, 341–361, 380–400, 466–486, 488–508, 520–540, and 541–561; these read TFLKWALAFLIGLATGLVGFL, FAFAGCNLILATAAASLCAFI, STLFVKIFGSIFGVAAGFVVG, MVHTGACIANLLGQGGSKKYR, GAAAGVAAAFRAPVGGVLFAL, ALLWRTFFTTAVVAVVLRSLI, LAIVFLGVIGGVLGSLYNYLV, IMLVMAVSILSSCCAFGLPWL, LAIFFVAVYCLGIITYGIAIP, GLFIPVILAGASYGRLVGRLL, SLLGAASFLGGTMRMTVSLCV, and ILLELTNNLLMLPLVMLVLLI. The CBS 1 domain occupies 601 to 659; sequence DVVSGALISFSRVEKVGVIWQALKMTRHNGFPVIDEPPFTEASELCGIALRSHLLVLLQ. Ser-672 carries the post-translational modification Phosphoserine. The CBS 2 domain maps to 713 to 777; it reads ITNTSPYTVL…VLGLYPHIDP (65 aa). The helical transmembrane segment at 741-761 threads the bilayer; it reads HLCVVPKTPGRPPIVGILTRH.

The protein belongs to the chloride channel (TC 2.A.49) family. In terms of assembly, homodimer. Interacts with PP2A5. Broadly expressed in the plant.

The protein localises to the membrane. In terms of biological role, voltage-gated chloride channel. This chain is Chloride channel protein CLC-c (CLC-C), found in Arabidopsis thaliana (Mouse-ear cress).